Consider the following 505-residue polypeptide: Lysine--tRNA ligase (505 aa).

Mg(2+) is bound by residues Glu415 and Glu422.

This sequence belongs to the class-II aminoacyl-tRNA synthetase family. Homodimer. It depends on Mg(2+) as a cofactor.

Its subcellular location is the cytoplasm. The enzyme catalyses tRNA(Lys) + L-lysine + ATP = L-lysyl-tRNA(Lys) + AMP + diphosphate. The polypeptide is Lysine--tRNA ligase (Pectobacterium atrosepticum (strain SCRI 1043 / ATCC BAA-672) (Erwinia carotovora subsp. atroseptica)).